The chain runs to 232 residues: Floral homeotic protein APETALA 3 (232 aa).

Positions 3-57 (RGKIQIKRIENQTNRQVTYSKRRNGLFKKAHELTVLCDARVSIIMFSSSNKLHEY) constitute an MADS-box domain. Positions 75–164 (SDVDVWATQY…KSQQDIQKNL (90 aa)) form a coiled coil. Residues 84-174 (YERMQETKRK…IHELELRAED (91 aa)) form the K-box domain.

As to quaternary structure, forms a heterodimer with PISTILLATA, capable of binding to CArG-box sequences. AP3/PI heterodimer binds AP1 or SEP3 to form complexes. As to expression, expressed in petals and stamens.

The protein resides in the nucleus. In terms of biological role, probable transcription factor involved in the genetic control of flower development. Is required for normal development of petals and stamens in the wild-type flower. Forms a heterodimer with PISTILLATA that is required for autoregulation of both AP3 and PI genes. AP3/PI heterodimer interacts with APETALA1 or SEPALLATA3 to form a ternary complex that could be responsible for the regulation of the genes involved in the flower development. AP3/PI heterodimer activates the expression of NAP. AP3/PI prevents GATA22/GNL and GATA21/GNC expression. The sequence is that of Floral homeotic protein APETALA 3 (AP3) from Arabidopsis thaliana (Mouse-ear cress).